The primary structure comprises 52 residues: Ovomucoid (52 aa).

The region spanning 2 to 52 (VDCSDYPKPVCTLEEMPLCGSDNKTYGNKCNFCNAVVDSNGTLTLSHFGKC) is the Kazal-like domain. 3 disulfide bridges follow: C4-C34, C12-C31, and C20-C52. An N-linked (GlcNAc...) asparagine glycan is attached at N41.

It is found in the secreted. The protein is Ovomucoid of Scythrops novaehollandiae (Channel-billed cuckoo).